A 194-amino-acid chain; its full sequence is HTH-type transcriptional regulator BetI (194 aa).

The 61-residue stretch at 8 to 68 folds into the HTH tetR-type domain; sequence EIRRAQLIDA…ATMRHVLRDL (61 aa). The H-T-H motif DNA-binding region spans 31 to 50; that stretch reads TLASVAQRANISTGIVSHYF.

It functions in the pathway amine and polyamine biosynthesis; betaine biosynthesis via choline pathway [regulation]. Repressor involved in the biosynthesis of the osmoprotectant glycine betaine. It represses transcription of the choline transporter BetT and the genes of BetAB involved in the synthesis of glycine betaine. In Burkholderia lata (strain ATCC 17760 / DSM 23089 / LMG 22485 / NCIMB 9086 / R18194 / 383), this protein is HTH-type transcriptional regulator BetI.